The chain runs to 206 residues: Small ribosomal subunit protein uS4 (206 aa).

Residues 18–46 (NIWGRPKSPVNRREYGPGQHGQRRKGKLS) form a disordered region. One can recognise an S4 RNA-binding domain in the interval 94–156 (RRLDAVVYRA…SKQNVAVLEA (63 aa)).

Belongs to the universal ribosomal protein uS4 family. Part of the 30S ribosomal subunit. Contacts protein S5. The interaction surface between S4 and S5 is involved in control of translational fidelity.

One of the primary rRNA binding proteins, it binds directly to 16S rRNA where it nucleates assembly of the body of the 30S subunit. In terms of biological role, with S5 and S12 plays an important role in translational accuracy. This Ruegeria sp. (strain TM1040) (Silicibacter sp.) protein is Small ribosomal subunit protein uS4.